We begin with the raw amino-acid sequence, 181 residues long: uncharacterized protein (181 aa).

The next 2 membrane-spanning stretches (helical) occupy residues 24–46 (IAAVLISTSFVLFGFLALVLLNV) and 55–77 (GIVAIVSLIAIWVLMTAGVYILL).

The protein localises to the cell membrane. This is an uncharacterized protein from Archaeoglobus fulgidus (strain ATCC 49558 / DSM 4304 / JCM 9628 / NBRC 100126 / VC-16).